We begin with the raw amino-acid sequence, 405 residues long: Corticosteroid-binding globulin (405 aa).

A signal peptide spans Met1 to Ala22. Asn31, Asn96, and Asn176 each carry an N-linked (GlcNAc...) asparagine glycan. A cortisol-binding site is contributed by Gln254. Residue Asn260 is glycosylated (N-linked (GlcNAc...) asparagine). Asn286 is a binding site for cortisol. 2 N-linked (GlcNAc...) asparagine glycosylation sites follow: Asn330 and Asn369. 2 residues coordinate cortisol: His390 and Trp393.

It belongs to the serpin family. In terms of processing, N-glycosylated; binds 5 oligosaccharide chains. Post-translationally, glycosylation in position Asn-260 is needed for steroid binding. As to expression, plasma; synthesized in liver. Has also been identified in a number of glycocorticoid responsive cells.

The protein resides in the secreted. Functionally, major transport protein for glucocorticoids and progestins in the blood of almost all vertebrate species. The chain is Corticosteroid-binding globulin (SERPINA6) from Homo sapiens (Human).